The following is a 344-amino-acid chain: Zinc transporter 9 (344 aa).

Residues 1-21 (MASILISGAAGVSIPLVGTLL) form a helical membrane-spanning segment. Over 22–30 (PLNGGLMRG) the chain is Cytoplasmic. A helical membrane pass occupies residues 31–51 (AKAFAAGVILATGFVHMLSGG). The Extracellular portion of the chain corresponds to 52–72 (SKALSDPCLPEFPWKMFPFPE). The helical transmembrane segment at 73-93 (FFAMVAALLTLLADFMITGYY) threads the bilayer. Topologically, residues 94–188 (ERKQEKMMNQ…DVGLDSGVRH (95 aa)) are cytoplasmic. The helical transmembrane segment at 189 to 209 (VVVSQILEMGIVSHSIIIGIS) threads the bilayer. Over 210–221 (LGVSHSPCTIRP) the chain is Extracellular. The chain crosses the membrane as a helical span at residues 222-242 (LLLALSFHQFFEGFALGGCVA). The Cytoplasmic portion of the chain corresponds to 243-251 (EARLTPRGS). Residues 252–272 (AMMAFFFAITTPIGVAVGTAI) traverse the membrane as a helical segment. At 273-291 (ASSYNSYSVAALVAEGVLD) the chain is on the extracellular side. A helical membrane pass occupies residues 292-312 (SLSAGILVYMALVDLIAADFL). Over 313–323 (SKKMSVDFRVQ) the chain is Cytoplasmic. Residues 324–344 (VVSYCFLFLGAGMMSALAIWA) traverse the membrane as a helical segment.

This sequence belongs to the ZIP transporter (TC 2.A.5) family.

It is found in the cell membrane. Its function is as follows. Zinc transporter involved in zinc uptake in roots. Targeted by BZIP19 transcription factor in response to zinc-deficient conditions. This is Zinc transporter 9 (ZIP9) from Arabidopsis thaliana (Mouse-ear cress).